The sequence spans 250 residues: Pyrroloquinoline-quinone synthase (250 aa).

Belongs to the PqqC family.

The enzyme catalyses 6-(2-amino-2-carboxyethyl)-7,8-dioxo-1,2,3,4,7,8-hexahydroquinoline-2,4-dicarboxylate + 3 O2 = pyrroloquinoline quinone + 2 H2O2 + 2 H2O + H(+). Its pathway is cofactor biosynthesis; pyrroloquinoline quinone biosynthesis. Functionally, ring cyclization and eight-electron oxidation of 3a-(2-amino-2-carboxyethyl)-4,5-dioxo-4,5,6,7,8,9-hexahydroquinoline-7,9-dicarboxylic-acid to PQQ. The sequence is that of Pyrroloquinoline-quinone synthase from Ectopseudomonas mendocina (strain ymp) (Pseudomonas mendocina).